The following is a 204-amino-acid chain: Leucyl/phenylalanyl-tRNA--protein transferase (204 aa).

This sequence belongs to the L/F-transferase family.

Its subcellular location is the cytoplasm. The enzyme catalyses N-terminal L-lysyl-[protein] + L-leucyl-tRNA(Leu) = N-terminal L-leucyl-L-lysyl-[protein] + tRNA(Leu) + H(+). The catalysed reaction is N-terminal L-arginyl-[protein] + L-leucyl-tRNA(Leu) = N-terminal L-leucyl-L-arginyl-[protein] + tRNA(Leu) + H(+). It carries out the reaction L-phenylalanyl-tRNA(Phe) + an N-terminal L-alpha-aminoacyl-[protein] = an N-terminal L-phenylalanyl-L-alpha-aminoacyl-[protein] + tRNA(Phe). Functionally, functions in the N-end rule pathway of protein degradation where it conjugates Leu, Phe and, less efficiently, Met from aminoacyl-tRNAs to the N-termini of proteins containing an N-terminal arginine or lysine. This chain is Leucyl/phenylalanyl-tRNA--protein transferase, found in Brucella melitensis biotype 2 (strain ATCC 23457).